We begin with the raw amino-acid sequence, 306 residues long: Non-specific ribonucleoside hydrolase RihC (306 aa).

His-235 is an active-site residue.

Belongs to the IUNH family. RihC subfamily.

Hydrolyzes both purine and pyrimidine ribonucleosides with a broad-substrate specificity. This is Non-specific ribonucleoside hydrolase RihC from Salmonella schwarzengrund (strain CVM19633).